The following is a 1186-amino-acid chain: Partner and localizer of BRCA2 (1186 aa).

The interval 1–160 is required for its oligomerization and is important for its focal concentration at DNA damage sites; it reads MDEPPGKPLS…QKRTFISQER (160 aa). The tract at residues 1–200 is interaction with RAD51; the sequence is MDEPPGKPLS…PVTEIRTHLL (200 aa). Residues 1–319 form an interaction with BRCA1 region; it reads MDEPPGKPLS…SKSGQLPTSS (319 aa). Residues 1–579 form a DNA-binding (with the preference D loop &gt; dsDNA &gt; ssDNA) region; that stretch reads MDEPPGKPLS…EDSLSWSNSA (579 aa). A coiled-coil region spans residues 9–41; it reads LSCEEKEKLKEKLAFLKREYSKTLARLQRAQRA. Disordered stretches follow at residues 52-72 and 95-157; these read VEEQDCLSQQDLSPQLKHSEP and KTSI…TFIS. Over residues 120-141 the composition is skewed to basic and acidic residues; sequence RTDDTQEHFPHRVSDPSGEQKQ. Over residues 143-152 the composition is skewed to basic residues; the sequence is LPSRRKKQQK. Phosphoserine is present on residues S172 and S190. The tract at residues 252-273 is disordered; that stretch reads TLSDSGSSQHLEHIPPKGSSEL. A Phosphoserine modification is found at S285. The segment at 346-365 is disordered; that stretch reads KEQNQTEKSLKSPSDTLDGR. S376 and S387 each carry phosphoserine. The chAM (Chromatin-association motif); required for chromatin association, mediates nucleosome association stretch occupies residues 395–446; that stretch reads SCTVPEGLLFPAEYYVRTTRSMSNCQRKVAVEAVIQSHLDVKKKGFKNKNKD. The disordered stretch occupies residues 440 to 525; the sequence is FKNKNKDASK…RKSACTPASD (86 aa). Position 454 is a phosphoserine (S454). A compositionally biased stretch (polar residues) spans 467–488; the sequence is GTCTGQPSSRTSQKLLSLTKVS. Position 660 is a phosphoserine (S660). Disordered stretches follow at residues 679–698 and 774–798; these read PGKSHPKRPNSQSQHTKTGL and KQFDSSGSPAKPHTTLQVSGRQGQP. Residues 687–698 show a composition bias toward polar residues; that stretch reads PNSQSQHTKTGL. Positions 775–1186 are required for interaction with POLH and POLH DNA synthesis stimulation; the sequence is QFDSSGSPAK…DGNIFVYHYS (412 aa). S781 is subject to Phosphoserine. The interaction with RAD51, BRCA2 and POLH stretch occupies residues 853-1186; that stretch reads GNLQLVSELK…DGNIFVYHYS (334 aa). WD repeat units follow at residues 854–915, 917–961, 962–1009, 1010–1052, 1058–1109, 1115–1153, and 1155–1186; these read NLQL…WHFA, VPVL…QVLL, KSGN…LMPP, EETI…MHID, SVCH…MLYC, AGRFLEGDVKDHCAAAILTSGTIAIWDLLLGQCTALLPP, and SDQHWSFVKWSGTDSHLLAGQKDGNIFVYHYS.

As to quaternary structure, homooligomer; dissociated upon DNA damage thus allowing association with BRCA1. Oligomerization is essential for its focal accumulation at DNA breaks. Part of a BRCA complex containing BRCA1, BRCA2 and PALB2. Interacts with BRCA1 and this interaction is essential for its function in HRR. Interacts with RAD51AP1 and MORF4L1/MRG15. Component of the homologous recombination repair (HR) complex composed of ERCC5/XPG, BRCA2, PALB2, DSS1 and RAD51. Within the complex, interacts with ERCC5/XPG and BRCA2. Interacts with BRCA2, RAD51C, RAD51 and XRCC3; the interactions are direct and it may serve as a scaffold for a HR complex containing PALB2, BRCA2, RAD51C, RAD51 and XRCC3. Interacts with POLH; the interaction is direct.

It is found in the nucleus. Plays a critical role in homologous recombination repair (HRR) through its ability to recruit BRCA2 and RAD51 to DNA breaks. Strongly stimulates the DNA strand-invasion activity of RAD51, stabilizes the nucleoprotein filament against a disruptive BRC3-BRC4 polypeptide and helps RAD51 to overcome the suppressive effect of replication protein A (RPA). Functionally cooperates with RAD51AP1 in promoting of D-loop formation by RAD51. Serves as the molecular scaffold in the formation of the BRCA1-PALB2-BRCA2 complex which is essential for homologous recombination. Via its WD repeats is proposed to scaffold a HR complex containing RAD51C and BRCA2 which is thought to play a role in HR-mediated DNA repair. Essential partner of BRCA2 that promotes the localization and stability of BRCA2. Also enables its recombinational repair and checkpoint functions of BRCA2. May act by promoting stable association of BRCA2 with nuclear structures, allowing BRCA2 to escape the effects of proteasome-mediated degradation. Binds DNA with high affinity for D loop, which comprises single-stranded, double-stranded and branched DNA structures. May play a role in the extension step after strand invasion at replication-dependent DNA double-strand breaks; together with BRCA2 is involved in both POLH localization at collapsed replication forks and DNA polymerization activity. The polypeptide is Partner and localizer of BRCA2 (PALB2) (Homo sapiens (Human)).